Here is a 367-residue protein sequence, read N- to C-terminus: Peptide chain release factor 2 (367 aa).

Q254 carries the post-translational modification N5-methylglutamine.

It belongs to the prokaryotic/mitochondrial release factor family. Methylated by PrmC. Methylation increases the termination efficiency of RF2.

The protein resides in the cytoplasm. Functionally, peptide chain release factor 2 directs the termination of translation in response to the peptide chain termination codons UGA and UAA. This Neisseria meningitidis serogroup A / serotype 4A (strain DSM 15465 / Z2491) protein is Peptide chain release factor 2.